Here is a 536-residue protein sequence, read N- to C-terminus: Glutamyl-tRNA(Gln) amidotransferase subunit B, mitochondrial (536 aa).

A mitochondrion-targeting transit peptide spans 1 to 8 (MLRVHRLY).

This sequence belongs to the GatB/GatE family. GatB subfamily. In terms of assembly, subunit of the heterotrimeric GatFAB amidotransferase (AdT) complex, composed of A, B and F subunits.

The protein resides in the mitochondrion. It catalyses the reaction L-glutamyl-tRNA(Gln) + L-glutamine + ATP + H2O = L-glutaminyl-tRNA(Gln) + L-glutamate + ADP + phosphate + H(+). Functionally, allows the formation of correctly charged Gln-tRNA(Gln) through the transamidation of misacylated Glu-tRNA(Gln) in the mitochondria. The reaction takes place in the presence of glutamine and ATP through an activated gamma-phospho-Glu-tRNA(Gln). This chain is Glutamyl-tRNA(Gln) amidotransferase subunit B, mitochondrial, found in Eremothecium gossypii (strain ATCC 10895 / CBS 109.51 / FGSC 9923 / NRRL Y-1056) (Yeast).